The following is a 211-amino-acid chain: Shikimate kinase (211 aa).

The segment at 1–23 (MNASANLCAASDNDPQPGDQEAA) is disordered. Residue 50-55 (GAGKTT) coordinates ATP. Threonine 54 contributes to the Mg(2+) binding site. The substrate site is built by aspartate 72, arginine 96, and glycine 118. Arginine 156 provides a ligand contact to ATP. Arginine 175 is a binding site for substrate.

It belongs to the shikimate kinase family. In terms of assembly, monomer. Requires Mg(2+) as cofactor.

The protein resides in the cytoplasm. It carries out the reaction shikimate + ATP = 3-phosphoshikimate + ADP + H(+). It functions in the pathway metabolic intermediate biosynthesis; chorismate biosynthesis; chorismate from D-erythrose 4-phosphate and phosphoenolpyruvate: step 5/7. Its function is as follows. Catalyzes the specific phosphorylation of the 3-hydroxyl group of shikimic acid using ATP as a cosubstrate. This Bordetella bronchiseptica (strain ATCC BAA-588 / NCTC 13252 / RB50) (Alcaligenes bronchisepticus) protein is Shikimate kinase.